Reading from the N-terminus, the 66-residue chain is MQRGKVKWFNNEKGYGFIEVEGGSDVFVHFTAIQGEGFKSLEEGQEVSFEIVQGNRGPQAANVVKL.

The CSD domain occupies 4 to 63; sequence GKVKWFNNEKGYGFIEVEGGSDVFVHFTAIQGEGFKSLEEGQEVSFEIVQGNRGPQAANV.

In terms of assembly, homodimer.

Its subcellular location is the cytoplasm. Its function is as follows. Affects cell viability at low temperatures. The protein is Cold shock protein CspB (cspB) of Geobacillus stearothermophilus (Bacillus stearothermophilus).